Reading from the N-terminus, the 458-residue chain is Pyruvate kinase (458 aa).

A substrate-binding site is contributed by R33. Residues N35, S37, and D67 each coordinate K(+). Residue 35–38 participates in ATP binding; sequence NASH. Residues R74 and K148 each contribute to the ATP site. Residue E214 participates in Mg(2+) binding. Substrate-binding residues include G237, D238, and T270. D238 contributes to the Mg(2+) binding site.

The protein belongs to the pyruvate kinase family. As to quaternary structure, homotetramer. A divalent metal cation serves as cofactor.

The catalysed reaction is pyruvate + ATP = phosphoenolpyruvate + ADP + H(+). It participates in carbohydrate degradation; glycolysis; pyruvate from D-glyceraldehyde 3-phosphate: step 5/5. Not activated by classical allosteric effectors. This chain is Pyruvate kinase (pyk), found in Aeropyrum pernix (strain ATCC 700893 / DSM 11879 / JCM 9820 / NBRC 100138 / K1).